The chain runs to 430 residues: Transcobalamin-2 (430 aa).

An N-terminal signal peptide occupies residues 1–18 (MELLKALLLLSGVFGALA). Disulfide bonds link C21/C270, C116/C312, and C165/C208. Residues 152-156 (TNYYQ), H193, 193-197 (HVSVD), N245, S248, Q294, and 398-400 (WQL) each bind cob(II)alamin.

This sequence belongs to the eukaryotic cobalamin transport proteins family. As to quaternary structure, interacts with CD320 (via LDL-receptor class A domains).

It is found in the secreted. Its function is as follows. Primary vitamin B12-binding and transport protein. Delivers cobalamin to cells. The protein is Transcobalamin-2 (Tcn2) of Mus musculus (Mouse).